The sequence spans 215 residues: Cytochrome c biogenesis ATP-binding export protein CcmA (215 aa).

In terms of domain architecture, ABC transporter spans 12–215 (LAAHALTYSR…TRLLHLQKAP (204 aa)). 44-51 (GPNGIGKT) contacts ATP.

It belongs to the ABC transporter superfamily. CcmA exporter (TC 3.A.1.107) family. In terms of assembly, the complex is composed of two ATP-binding proteins (CcmA) and two transmembrane proteins (CcmB).

It localises to the cell inner membrane. It carries out the reaction heme b(in) + ATP + H2O = heme b(out) + ADP + phosphate + H(+). Part of the ABC transporter complex CcmAB involved in the biogenesis of c-type cytochromes; once thought to export heme, this seems not to be the case, but its exact role is uncertain. Responsible for energy coupling to the transport system. The polypeptide is Cytochrome c biogenesis ATP-binding export protein CcmA (Xylella fastidiosa (strain Temecula1 / ATCC 700964)).